A 253-amino-acid chain; its full sequence is Tetraspanin-3 (253 aa).

The Cytoplasmic segment spans residues 1 to 11; sequence MGQCGITSSKT. Residues 12–32 form a helical membrane-spanning segment; sequence VLVFLNLIFWGAAGILCYVGA. Over 33 to 50 the chain is Extracellular; sequence YVFITYDDYDHFFEDVYT. The chain crosses the membrane as a helical span at residues 51–71; the sequence is LIPAVVIIAVGALLFIIGLIG. Over 72-85 the chain is Cytoplasmic; the sequence is CCATIRESRCGLAT. The helical transmembrane segment at 86-106 threads the bilayer; that stretch reads FVIILLLVFVTEVVVVVLGYV. Topologically, residues 107–212 are extracellular; the sequence is YRAKVENEVD…KKLQEIMMHV (106 aa). 4 N-linked (GlcNAc...) asparagine glycosylation sites follow: Asn127, Asn152, Asn167, and Asn183. A helical membrane pass occupies residues 213–233; it reads IWAALAFAAIQLLGMLCACIV. Residues 234-253 are Cytoplasmic-facing; sequence LCRRSRDPAYELLITGGTYA.

It belongs to the tetraspanin (TM4SF) family. In terms of assembly, interacts with claudin-11/CLDN11 and integrins.

It is found in the membrane. Its function is as follows. Regulates the proliferation and migration of oligodendrocytes, a process essential for normal myelination and repair. The sequence is that of Tetraspanin-3 (TSPAN3) from Homo sapiens (Human).